A 265-amino-acid chain; its full sequence is Non-structural protein 2a (265 aa).

The protein belongs to the coronaviruses ns2a protein family.

It localises to the host cytoplasm. Functionally, not essential for virus replication in transformed murine cells. In Mus musculus (Mouse), this protein is Non-structural protein 2a.